The chain runs to 393 residues: UDP-N-acetylglucosamine--N-acetylmuramyl-(pentapeptide) pyrophosphoryl-undecaprenol N-acetylglucosamine transferase (393 aa).

Residues 14-16, asparagine 128, arginine 170, serine 210, and glutamine 321 contribute to the UDP-N-acetyl-alpha-D-glucosamine site; that span reads TAG.

Belongs to the glycosyltransferase 28 family. MurG subfamily.

It localises to the cell membrane. It carries out the reaction di-trans,octa-cis-undecaprenyl diphospho-N-acetyl-alpha-D-muramoyl-L-alanyl-D-glutamyl-meso-2,6-diaminopimeloyl-D-alanyl-D-alanine + UDP-N-acetyl-alpha-D-glucosamine = di-trans,octa-cis-undecaprenyl diphospho-[N-acetyl-alpha-D-glucosaminyl-(1-&gt;4)]-N-acetyl-alpha-D-muramoyl-L-alanyl-D-glutamyl-meso-2,6-diaminopimeloyl-D-alanyl-D-alanine + UDP + H(+). Its pathway is cell wall biogenesis; peptidoglycan biosynthesis. Functionally, cell wall formation. Catalyzes the transfer of a GlcNAc subunit on undecaprenyl-pyrophosphoryl-MurNAc-pentapeptide (lipid intermediate I) to form undecaprenyl-pyrophosphoryl-MurNAc-(pentapeptide)GlcNAc (lipid intermediate II). In Bifidobacterium adolescentis (strain ATCC 15703 / DSM 20083 / NCTC 11814 / E194a), this protein is UDP-N-acetylglucosamine--N-acetylmuramyl-(pentapeptide) pyrophosphoryl-undecaprenol N-acetylglucosamine transferase.